Here is a 638-residue protein sequence, read N- to C-terminus: Chaperone protein HtpG (638 aa).

An a; substrate-binding region spans residues 1 to 328 (MGDVEELKFS…SSDLPLNISR (328 aa)). A b region spans residues 329–558 (ETLQNNMVIE…EHALDIRMER (230 aa)). The interval 484–508 (LEKFTEGDDQQSTKKKKEKKDTDDA) is disordered. The c stretch occupies residues 559 to 638 (FLREQKQLSY…NQVLARLFKK (80 aa)).

This sequence belongs to the heat shock protein 90 family. Homodimer.

The protein localises to the cytoplasm. In terms of biological role, molecular chaperone. Has ATPase activity. This chain is Chaperone protein HtpG, found in Anaplasma marginale (strain St. Maries).